The chain runs to 710 residues: MADAKYVLCRWEKRLWPAKVLARTATSTKNKRRKEYFLAVQILSLEEKIKVKSTEVEILEKSQIEAIASSLASQNEVPAAPLEELAYRRSLRVALDVLSEGSIWSQESSAGTGRADRSLRGKPMEHVSSPCDSNSSSLPRGDVLGSSRPHRRRPCVQQSLSSSFTCEKDPECKVDHKKGLRKSENPRGPLVLPAGGGAQDESGSRIHHKNWTLASKRGGNSAQKASLCLNGSSLSEDDTERDMGSKGGSWAAPSLPSGVREDDPCANAEGHDPGLPLGSLTAPPAPEPSACSEPGECPAKKRPRLDGSQRPPAVQLEPMAAGAAPSPGPGPGPRESVTPRSTARLGPPPSHASADATRCLPCPDSQKLEKECQSSEESMGSNSMRSILEEDEEDEEPPRVLLYHEPRSFEVGMLVWHKHKKYPFWPAVVKSVRQRDKKASVLYIEGHMNPKMKGFTVSLKSLKHFDCKEKQTLLNQAREDFNQDIGWCVSLITDYRVRLGCGSFAGSFLEYYAADISYPVRKSIQQDVLGTKLPQLSKGSPEEPVVGCPLGQRQPCRKMLPDRSRAARDRANQKLVEYIVKAKGAESHLRAILKSRKPSRWLQTFLSSSQYVTCVETYLEDEGQLDLVVKYLQGVYQEVGAKVLQRTNGDRIRFILDVLLPEAIICAISAVDEVDYKTAEEKYIKGPSLSYREKEIFDNQLLEERNRRRR.

Residues 106–160 are disordered; sequence QESSAGTGRADRSLRGKPMEHVSSPCDSNSSSLPRGDVLGSSRPHRRRPCVQQSL. A compositionally biased stretch (basic and acidic residues) spans 114–125; the sequence is RADRSLRGKPME. A compositionally biased stretch (low complexity) spans 128–137; sequence SSPCDSNSSS. A Phosphoserine modification is found at Ser161. Disordered stretches follow at residues 177 to 204 and 230 to 398; these read KKGLRKSENPRGPLVLPAGGGAQDESGS and NGSS…EEPP. Positions 288 to 297 are enriched in low complexity; that stretch reads PSACSEPGEC. Ser374 and Ser375 each carry phosphoserine. The span at 375–385 shows a compositional bias: polar residues; sequence SEESMGSNSMR. Residues 411-472 enclose the PWWP domain; sequence VGMLVWHKHK…KHFDCKEKQT (62 aa).

It belongs to the PWWP3A family. Interacts with TP53BP1 (via BRCT domain); the interaction is not dependent on its phosphorylation status. Binds nucleosomes. Interacts with trimethylated 'Lys-36' of histone H3 (H3K36me3) (in vitro).

It is found in the nucleus. In terms of biological role, involved in the DNA damage response pathway by contributing to the maintenance of chromatin architecture. Recruited to the vicinity of DNA breaks by TP53BP1 and plays an accessory role to facilitate damage-induced chromatin changes and promoting chromatin relaxation. Required for efficient DNA repair and cell survival following DNA damage. This is PWWP domain-containing DNA repair factor 3A from Homo sapiens (Human).